The chain runs to 391 residues: Isochorismate synthase EntC (391 aa).

Mg(2+) contacts are provided by threonine 140, threonine 142, valine 145, and aspartate 146. The active-site Proton acceptor is lysine 147. Catalysis depends on glutamate 197, which acts as the Proton donor. Positions 214, 215, 241, 303, 347, and 361 each coordinate isochorismate. Glutamate 241 serves as a coordination point for Mg(2+). Glutamate 376 contributes to the Mg(2+) binding site. Lysine 380 lines the isochorismate pocket.

This sequence belongs to the isochorismate synthase family. In terms of assembly, monomer. Forms a specific pairwise interaction with EntB; this interaction likely facilitates substrate channeling to connect the EntB and EntC active sites. Mg(2+) serves as cofactor.

The catalysed reaction is chorismate = isochorismate. Its pathway is siderophore biosynthesis; enterobactin biosynthesis. Functionally, involved in the biosynthesis of the siderophore enterobactin (macrocyclic trimeric lactone of N-(2,3-dihydroxybenzoyl)-serine). Catalyzes the reversible conversion of chorismate to isochorismate. The chain is Isochorismate synthase EntC from Escherichia coli O157:H7.